A 142-amino-acid chain; its full sequence is Putative pre-16S rRNA nuclease (142 aa).

This sequence belongs to the YqgF nuclease family.

It is found in the cytoplasm. Its function is as follows. Could be a nuclease involved in processing of the 5'-end of pre-16S rRNA. The chain is Putative pre-16S rRNA nuclease from Shouchella clausii (strain KSM-K16) (Alkalihalobacillus clausii).